We begin with the raw amino-acid sequence, 143 residues long: Transcriptional regulator MraZ (143 aa).

2 consecutive SpoVT-AbrB domains span residues 5–47 and 76–119; these read EFDH…TLEE and AVEV…DRET.

Belongs to the MraZ family. In terms of assembly, forms oligomers.

It is found in the cytoplasm. The protein localises to the nucleoid. This is Transcriptional regulator MraZ from Staphylococcus epidermidis (strain ATCC 35984 / DSM 28319 / BCRC 17069 / CCUG 31568 / BM 3577 / RP62A).